We begin with the raw amino-acid sequence, 518 residues long: MGRMALLSTSNKQGLVELARALVQEFGFTLLSSGGTAKALQTAGIPVTTVSEYTGAPEILGGRVKTLHPKIHGGILARRDRPQDEADLQAQAIHPIDLVVVNLYPFAETIAQPNVTLAEAIEQIDIGGPTLIRAAAKNHAHVTVLVDPSQYETYLQELRLYGDAQPAFRLACAQQAFALTAHYDQAIAEYLQKVTAAGTEPEILPPVFHLTGRQKQVLRYGENPHQRASWYVCGAHPRGWAAAHLLQGKELSYNNLLDLEAARGVISEFLGDSPPAAVIIKHTNPCGVAEGKTLVEAYERAFAADRVSAFGGIVALNRPLDGATAEALTRTFLECVVAPACEEAALPILKTKPKMRVLTLPELHRAPTTAIQTIAGGFLVQEIHPLPIDPEAWQVVTATEPSPELMAELIFAWKVVKHVKSNAIVVSRDRQTQGIGAGQMNRVGAVEIALSAAGEAARGGVLASDGFFPFADSVEAAALAGIAAIIQPGGSLRDSESIQAANAAGIAMVFTNQRHFRH.

The MGS-like domain occupies 1 to 146; it reads MGRMALLSTS…KNHAHVTVLV (146 aa).

This sequence belongs to the PurH family.

It catalyses the reaction (6R)-10-formyltetrahydrofolate + 5-amino-1-(5-phospho-beta-D-ribosyl)imidazole-4-carboxamide = 5-formamido-1-(5-phospho-D-ribosyl)imidazole-4-carboxamide + (6S)-5,6,7,8-tetrahydrofolate. It carries out the reaction IMP + H2O = 5-formamido-1-(5-phospho-D-ribosyl)imidazole-4-carboxamide. It functions in the pathway purine metabolism; IMP biosynthesis via de novo pathway; 5-formamido-1-(5-phospho-D-ribosyl)imidazole-4-carboxamide from 5-amino-1-(5-phospho-D-ribosyl)imidazole-4-carboxamide (10-formyl THF route): step 1/1. Its pathway is purine metabolism; IMP biosynthesis via de novo pathway; IMP from 5-formamido-1-(5-phospho-D-ribosyl)imidazole-4-carboxamide: step 1/1. The polypeptide is Bifunctional purine biosynthesis protein PurH (Thermosynechococcus vestitus (strain NIES-2133 / IAM M-273 / BP-1)).